The following is a 312-amino-acid chain: Acetyl-coenzyme A carboxylase carboxyl transferase subunit alpha (312 aa).

The CoA carboxyltransferase C-terminal domain occupies 25 to 286 (GDDSAVEILK…GNYIIEKLNE (262 aa)).

The protein belongs to the AccA family. In terms of assembly, acetyl-CoA carboxylase is a heterohexamer composed of biotin carboxyl carrier protein (AccB), biotin carboxylase (AccC) and two subunits each of ACCase subunit alpha (AccA) and ACCase subunit beta (AccD).

It localises to the cytoplasm. It carries out the reaction N(6)-carboxybiotinyl-L-lysyl-[protein] + acetyl-CoA = N(6)-biotinyl-L-lysyl-[protein] + malonyl-CoA. It participates in lipid metabolism; malonyl-CoA biosynthesis; malonyl-CoA from acetyl-CoA: step 1/1. Component of the acetyl coenzyme A carboxylase (ACC) complex. First, biotin carboxylase catalyzes the carboxylation of biotin on its carrier protein (BCCP) and then the CO(2) group is transferred by the carboxyltransferase to acetyl-CoA to form malonyl-CoA. The sequence is that of Acetyl-coenzyme A carboxylase carboxyl transferase subunit alpha from Campylobacter hominis (strain ATCC BAA-381 / DSM 21671 / CCUG 45161 / LMG 19568 / NCTC 13146 / CH001A).